A 431-amino-acid chain; its full sequence is D-tagatose-1,6-bisphosphate aldolase subunit KbaZ (431 aa).

This sequence belongs to the GatZ/KbaZ family. KbaZ subfamily. In terms of assembly, forms a complex with KbaY.

It participates in carbohydrate metabolism; D-tagatose 6-phosphate degradation; D-glyceraldehyde 3-phosphate and glycerone phosphate from D-tagatose 6-phosphate: step 2/2. Functionally, component of the tagatose-1,6-bisphosphate aldolase KbaYZ that is required for full activity and stability of the Y subunit. Could have a chaperone-like function for the proper and stable folding of KbaY. When expressed alone, KbaZ does not show any aldolase activity. The protein is D-tagatose-1,6-bisphosphate aldolase subunit KbaZ of Salmonella arizonae (strain ATCC BAA-731 / CDC346-86 / RSK2980).